The chain runs to 293 residues: MPWIQLTLSCSEEHAPQVGDMLMANGAQAVTYRDGADTPIFEPRPGDVILWEHTLATGLFDADADIKAIIANLKQSNIFGSDLQYKVDALEDKDWEREWMDNFHPIQFGENLWICPSWREIPKPEAVNILLDPGMAFGTGTHPTTAMCLRWIDANPPTGKTVVDFGCGSGILGIAALLFKAEHVVGIDIDQQALIATKDNAERNKVGDKFSLYLPSQQPETQVDLVLANVLAGPLRELADTILGFVSPGGQLVLSGILERQIEGVIEAYQPHIKFDTPTIDGDWAMLSGTRVG.

Positions 145, 166, 188, and 229 each coordinate S-adenosyl-L-methionine.

This sequence belongs to the methyltransferase superfamily. PrmA family.

It is found in the cytoplasm. It carries out the reaction L-lysyl-[protein] + 3 S-adenosyl-L-methionine = N(6),N(6),N(6)-trimethyl-L-lysyl-[protein] + 3 S-adenosyl-L-homocysteine + 3 H(+). Functionally, methylates ribosomal protein L11. The sequence is that of Ribosomal protein L11 methyltransferase from Idiomarina loihiensis (strain ATCC BAA-735 / DSM 15497 / L2-TR).